A 53-amino-acid polypeptide reads, in one-letter code: UPF0391 membrane protein Acid_3618 (53 aa).

A run of 2 helical transmembrane segments spans residues 6–26 and 28–48; these read LVFLVFALIAAVLGFGGLAGA and VGIAKILFFVFLVIWLVAFLM.

It belongs to the UPF0391 family.

The protein localises to the cell membrane. In Solibacter usitatus (strain Ellin6076), this protein is UPF0391 membrane protein Acid_3618.